A 422-amino-acid chain; its full sequence is Glutamyl-tRNA reductase (422 aa).

Substrate-binding positions include 48–51 (TCNR), S100, 105–107 (EDQ), and Q111. The active-site Nucleophile is the C49. Residue 180–185 (GTGEMG) coordinates NADP(+).

The protein belongs to the glutamyl-tRNA reductase family. Homodimer.

It carries out the reaction (S)-4-amino-5-oxopentanoate + tRNA(Glu) + NADP(+) = L-glutamyl-tRNA(Glu) + NADPH + H(+). It functions in the pathway porphyrin-containing compound metabolism; protoporphyrin-IX biosynthesis; 5-aminolevulinate from L-glutamyl-tRNA(Glu): step 1/2. Its function is as follows. Catalyzes the NADPH-dependent reduction of glutamyl-tRNA(Glu) to glutamate 1-semialdehyde (GSA). The polypeptide is Glutamyl-tRNA reductase (Methanococcoides burtonii (strain DSM 6242 / NBRC 107633 / OCM 468 / ACE-M)).